The chain runs to 1609 residues: MNSFASLGLIYSVVNLLTRVEAQIVFYQNSSTSLPVPTLVSTSIADFHESSSTGEVQYSSSYSYVQPSIDSFTSSSFLTSFEAPTETSSSYAVSSSLITSDTFSSYSDIFDEETSSLISTSAASSEKASSTLSSTAQPHRTSHSSSSFELPVTAPSSSSLPSSTSLTFTSVNPSQSWTSFNSEKSSALSSTIDFTSSEISGSTSPKSLESFDTTGTITSSYSPSPSSKNSNQTSLLSPLEPLSSSSGDLILSSTIQATTNDQTSKTIPTLVDATSSLPPTLRSSSMAPTSGSDSISHNFTSPPSKTSGNYDVLTSNSIDPSLFTTTSEYSSTQLSSLNRASKSETVNFTASIASTPFGTDSATSLIDPISSVGSTASSFVGISTANFSTQGNSNYVPESTASGSSQYQDWSSSSLPLSQTTWVVINTTNTQGSVTSTTSPAYVSTATKTVDGVITEYVTWCPLTQTKSQAIGVSSSISSVPQASSFSGSSILSSNSSTLAASNNVPESTASGSSQYQDWSSSSLPLSQTTWVVINTTNTQGSVTSTTSPAYVSTATKTVDGVITEYVTWCPLTQTKSQAIGISSSTISATQTSKPSSILTLGISTLQLSDATFKGTETINTHLMTESTSITEPTYFSGTSDSFYLCTSEVNLASSLSSYPNFSSSEGSTATITNSTVTFGSTSKYPSTSVSNPTEASQHVSSSVNSLTDFTSNSTETIAVISNIHKTSSNKDYSLTTTQLKTSGMQTLVLSTVTTTVNGAATEYTTWCPASSIAYTTSISYKTLVLTTEVCSHSECTPTVITSVTATSSTIPLLSTSSSTVLSSTVSEGAKNPAASEVTINTQVSATSEATSTSTQVSATSATATASESSTTSQVSTASETISTLGTQNFTTTGSLLFPALSTEMINTTVVSRKTLIISTEVCSHSKCVPTVITEVVTSKGTPSNGHSSQTLQTEAVEVTLSSHQTVTMSTEVCSNSICTPTVITSVQMRSTPFPYLTSSTSSSSLASTKKSSLEASSEMSTFSVSTQSLPLAFTSSEKRSTTSVSQWSNTVLTNTIMSSSSNVISTNEKPSSTTSPYNFSSGYSLPSSSTPSQYSLSTATTTINGIKTVYTTWCPLAEKSTVAASSQSSRSVDRFVSSSKPSSSLSQTSIQYTLSTATTTISGLKTVYTTWCPLTSKSTLGATTQTSSTAKVRITSASSATSTSISLSTSTESESSSGYLSKGVCSGTECTQDVPTQSSSPASTLAYSPSVSTSSSSSFSTTTASTLTSTHTSVPLLPSSSSISASSPSSTSLLSTSLPSPAFTSSTLPTATAVSSSTFIASSLPLSSKSSLSLSPVSSSILMSQFSSSSSSSSSLASLPSLSISPTVDTVSVLQPTTSIATLTCTDSQCQQEVSTICNGSNCDDVTSTATTPPSTVTDTMTCTGSECQKTTSSSCDGYSCKVSETYKSSATISACSGEGCQASATSELNSQYVTMTSVITPSAITTTSVEVHSTESTISITTVKPVTYTSSDTNGELITITSSSQTVIPSVTTIITRTKVAITSAPKPTTTTYVEQRLSSSGIATSFVAAASSTWITTPIVSTYAGSASKFLCSKFFMIMVMVINFI.

The N-terminal stretch at 1–22 (MNSFASLGLIYSVVNLLTRVEA) is a signal peptide. An N-linked (GlcNAc...) asparagine glycan is attached at N29. Disordered regions lie at residues 129–165 (SSTLSSTAQPHRTSHSSSSFELPVTAPSSSSLPSSTS), 196–243 (SSEI…EPLS), and 266–312 (TIPT…NYDV). A compositionally biased stretch (polar residues) spans 137–148 (QPHRTSHSSSSF). The span at 150-165 (LPVTAPSSSSLPSSTS) shows a compositional bias: low complexity. Positions 196–212 (SSEISGSTSPKSLESFD) are enriched in polar residues. Low complexity-rich tracts occupy residues 213-243 (TTGTITSSYSPSPSSKNSNQTSLLSPLEPLS) and 274-285 (TSSLPPTLRSSS). N-linked (GlcNAc...) asparagine glycosylation occurs at N231. The segment covering 286-312 (MAPTSGSDSISHNFTSPPSKTSGNYDV) has biased composition (polar residues). N-linked (GlcNAc...) asparagine glycans are attached at residues N298, N347, N386, N426, N495, N535, N661, N674, and N713. The tract at residues 846–876 (ATSEATSTSTQVSATSATATASESSTTSQVS) is disordered. N889, N907, and N1079 each carry an N-linked (GlcNAc...) asparagine glycan. Positions 1231–1243 (CTQDVPTQSSSPA) are enriched in polar residues. Residues 1231–1259 (CTQDVPTQSSSPASTLAYSPSVSTSSSSS) are disordered. Residues 1244 to 1259 (STLAYSPSVSTSSSSS) show a composition bias toward low complexity. N1400 carries an N-linked (GlcNAc...) asparagine glycan. G1588 is lipidated: GPI-anchor amidated glycine. The propeptide at 1589–1609 (SASKFLCSKFFMIMVMVINFI) is removed in mature form.

In terms of processing, N-glycosylated.

Its subcellular location is the secreted. It is found in the cell wall. It localises to the membrane. Its function is as follows. Required for efficient mating. Plays a role in maintenance of cell wall integrity during mating. Important for mating cell projection shape and conjugation bridge diameter. Plays a role in cell fusion and nuclear migration. This chain is Factor-induced gene 2 protein (FIG2), found in Saccharomyces cerevisiae (strain ATCC 204508 / S288c) (Baker's yeast).